The chain runs to 420 residues: Probable glucuronosyltransferase Os04g0398600 (420 aa).

The Cytoplasmic portion of the chain corresponds to 1 to 4; sequence MGSR. The chain crosses the membrane as a helical; Signal-anchor for type II membrane protein span at residues 5 to 25; it reads TVGWWLLAAAVVLAAAAADSG. Over 26 to 420 the chain is Lumenal; it reads EAERAAEQHS…AGPVGDLKAW (395 aa). N-linked (GlcNAc...) asparagine glycosylation is found at asparagine 147 and asparagine 408.

Belongs to the glycosyltransferase 47 family.

The protein resides in the golgi apparatus membrane. Involved in the synthesis of glucuronoxylan hemicellulose in secondary cell walls. In Oryza sativa subsp. japonica (Rice), this protein is Probable glucuronosyltransferase Os04g0398600.